Consider the following 521-residue polypeptide: Ankyrin repeat and death domain-containing protein 1B (521 aa).

ANK repeat units follow at residues 60–89 (AIER…NINA), 93–122 (MNRT…RVDV), 126–155 (HGLT…DQRA), 159–190 (EGMN…DLNQ), 194–223 (RGRK…HTSE), 227–256 (DGNT…EVNE), 260–289 (LNVS…DLQQ), 293–322 (SKEP…DVDV), 326–355 (RRQT…NLKI), and 359–388 (QGKT…YYAW). Residues 420 to 508 (TLLWNLAYRQ…ELAEKIRQFK (89 aa)) form the Death domain.

This is Ankyrin repeat and death domain-containing protein 1B (Ankdd1b) from Mus musculus (Mouse).